Here is a 1319-residue protein sequence, read N- to C-terminus: DNA-directed RNA polymerase subunit beta' (1319 aa).

The Zn(2+) site is built by C59, C61, C74, and C77. Residues D449, D451, and D453 each contribute to the Mg(2+) site. Zn(2+) is bound by residues C773, C846, C853, and C856.

It belongs to the RNA polymerase beta' chain family. The RNAP catalytic core consists of 2 alpha, 1 beta, 1 beta' and 1 omega subunit. When a sigma factor is associated with the core the holoenzyme is formed, which can initiate transcription. Mg(2+) serves as cofactor. Zn(2+) is required as a cofactor.

The enzyme catalyses RNA(n) + a ribonucleoside 5'-triphosphate = RNA(n+1) + diphosphate. In terms of biological role, DNA-dependent RNA polymerase catalyzes the transcription of DNA into RNA using the four ribonucleoside triphosphates as substrates. The protein is DNA-directed RNA polymerase subunit beta' of Fusobacterium nucleatum subsp. nucleatum (strain ATCC 25586 / DSM 15643 / BCRC 10681 / CIP 101130 / JCM 8532 / KCTC 2640 / LMG 13131 / VPI 4355).